A 234-amino-acid chain; its full sequence is Dienlactone hydrolase 2 (234 aa).

Residues C143, D167, and H199 contribute to the active site.

Belongs to the dienelactone hydrolase family.

It functions in the pathway xenobiotic degradation. Its function is as follows. Dienlactone hydrolase; part of the Fusarium detoxification of benzoxazolinone cluster 2 (FDB2) involved in the degradation of benzoxazolinones produced by the host plant. Maize, wheat, and rye produce the 2 benzoxazinone phytoanticipins 2,4-dihy-droxy-7-methoxy-1,4-benzoxazin-3-one (DIMBOA) and 2,4-dihydroxy-1,4-benzoxazin-3-one (DIBOA) that, due to their inherent instability once released, spontaneously degrade to the more stable corresponding benzoxazolinones, 6-methoxy-2-benzoxazolinone (MBOA) and 2-benzoxazolinone (BOA), respectively. The first step in the detoxification of benzoxazolinones involves the hydrolysis of the cyclic ester bond of benzoxazolinones by the FDB1 cluster gamma-lactamase MBL1 to aminophenols. MBL1 is able to convert BOA into 2-aminophenol (2-AP), as well as MBOA into 5-methoxy-2-aminophenol (2-AMP). The FDB2 cluster N-malonyltransferase FDB2/NAT1 then metabolizes aminophenols via N-malonylation to non-toxic malonamic acids. FDB2/NAT1 converts 2-AP into N-(2-hydroxyphenyl) malonamic acid (HPMA) and 2-AMP into N-(2-hydroxy-4-methoxyphenyl) malonamic acid (HMPMA). The duplicated dienlactone hydrolases DLH1 and DLH2 may provide redundant function for hydrolyzing the lactone moiety in the BOA molecule. The roles of the amidases and other enzymes encoded by the 2 FDB clusters have not been identified so far. The protein is Dienlactone hydrolase 2 of Gibberella moniliformis (strain M3125 / FGSC 7600) (Maize ear and stalk rot fungus).